A 185-amino-acid polypeptide reads, in one-letter code: uncharacterized protein (185 aa).

Positions 39–177 (LWHASAGVLV…SWPFVPDSRA (139 aa)) constitute a Nudix hydrolase domain. The Nudix box motif lies at 77–99 (GGVVDPGETPQETAIREVGEELG). Residues Glu93 and Glu97 each coordinate Mg(2+).

Belongs to the Nudix hydrolase family. The cofactor is Mg(2+).

This is an uncharacterized protein from Rhodococcus erythropolis (Arthrobacter picolinophilus).